A 291-amino-acid chain; its full sequence is ATP synthase gamma chain (291 aa).

This sequence belongs to the ATPase gamma chain family. F-type ATPases have 2 components, CF(1) - the catalytic core - and CF(0) - the membrane proton channel. CF(1) has five subunits: alpha(3), beta(3), gamma(1), delta(1), epsilon(1). CF(0) has three main subunits: a, b and c.

The protein resides in the cell inner membrane. Functionally, produces ATP from ADP in the presence of a proton gradient across the membrane. The gamma chain is believed to be important in regulating ATPase activity and the flow of protons through the CF(0) complex. In Burkholderia ambifaria (strain MC40-6), this protein is ATP synthase gamma chain.